Consider the following 450-residue polypeptide: Phosphoglucosamine mutase (450 aa).

Catalysis depends on serine 101, which acts as the Phosphoserine intermediate. The Mg(2+) site is built by serine 101, aspartate 241, aspartate 243, and aspartate 245. Phosphoserine is present on serine 101.

This sequence belongs to the phosphohexose mutase family. Mg(2+) serves as cofactor. Activated by phosphorylation.

The catalysed reaction is alpha-D-glucosamine 1-phosphate = D-glucosamine 6-phosphate. In terms of biological role, catalyzes the conversion of glucosamine-6-phosphate to glucosamine-1-phosphate. In Ligilactobacillus salivarius (strain UCC118) (Lactobacillus salivarius), this protein is Phosphoglucosamine mutase.